A 239-amino-acid polypeptide reads, in one-letter code: 1-(5-phosphoribosyl)-5-[(5-phosphoribosylamino)methylideneamino] imidazole-4-carboxamide isomerase (239 aa).

Asp-8 serves as the catalytic Proton acceptor. The active-site Proton donor is the Asp-129.

The protein belongs to the HisA/HisF family.

Its subcellular location is the cytoplasm. It carries out the reaction 1-(5-phospho-beta-D-ribosyl)-5-[(5-phospho-beta-D-ribosylamino)methylideneamino]imidazole-4-carboxamide = 5-[(5-phospho-1-deoxy-D-ribulos-1-ylimino)methylamino]-1-(5-phospho-beta-D-ribosyl)imidazole-4-carboxamide. It participates in amino-acid biosynthesis; L-histidine biosynthesis; L-histidine from 5-phospho-alpha-D-ribose 1-diphosphate: step 4/9. This is 1-(5-phosphoribosyl)-5-[(5-phosphoribosylamino)methylideneamino] imidazole-4-carboxamide isomerase from Legionella pneumophila (strain Corby).